A 421-amino-acid chain; its full sequence is Tyrosine--tRNA ligase (421 aa).

Residue tyrosine 42 participates in L-tyrosine binding. The short motif at 47-56 is the 'HIGH' region element; sequence CTAPSLHVGS. 2 residues coordinate L-tyrosine: tyrosine 179 and glutamine 183. The 'KMSKS' region signature appears at 239 to 243; the sequence is KMGKT. Lysine 242 lines the ATP pocket. Residues 354–419 form the S4 RNA-binding domain; the sequence is LGILAAFAKA…RKKHVLLRLA (66 aa).

This sequence belongs to the class-I aminoacyl-tRNA synthetase family. TyrS type 1 subfamily. As to quaternary structure, homodimer.

The protein resides in the cytoplasm. It carries out the reaction tRNA(Tyr) + L-tyrosine + ATP = L-tyrosyl-tRNA(Tyr) + AMP + diphosphate + H(+). In terms of biological role, catalyzes the attachment of tyrosine to tRNA(Tyr) in a two-step reaction: tyrosine is first activated by ATP to form Tyr-AMP and then transferred to the acceptor end of tRNA(Tyr). The sequence is that of Tyrosine--tRNA ligase from Beijerinckia indica subsp. indica (strain ATCC 9039 / DSM 1715 / NCIMB 8712).